We begin with the raw amino-acid sequence, 93 residues long: Pyrimidine/purine nucleoside phosphorylase (93 aa).

Belongs to the nucleoside phosphorylase PpnP family.

It carries out the reaction a purine D-ribonucleoside + phosphate = a purine nucleobase + alpha-D-ribose 1-phosphate. The catalysed reaction is adenosine + phosphate = alpha-D-ribose 1-phosphate + adenine. The enzyme catalyses cytidine + phosphate = cytosine + alpha-D-ribose 1-phosphate. It catalyses the reaction guanosine + phosphate = alpha-D-ribose 1-phosphate + guanine. It carries out the reaction inosine + phosphate = alpha-D-ribose 1-phosphate + hypoxanthine. The catalysed reaction is thymidine + phosphate = 2-deoxy-alpha-D-ribose 1-phosphate + thymine. The enzyme catalyses uridine + phosphate = alpha-D-ribose 1-phosphate + uracil. It catalyses the reaction xanthosine + phosphate = alpha-D-ribose 1-phosphate + xanthine. In terms of biological role, catalyzes the phosphorolysis of diverse nucleosides, yielding D-ribose 1-phosphate and the respective free bases. Can use uridine, adenosine, guanosine, cytidine, thymidine, inosine and xanthosine as substrates. Also catalyzes the reverse reactions. This is Pyrimidine/purine nucleoside phosphorylase from Marinobacter nauticus (strain ATCC 700491 / DSM 11845 / VT8) (Marinobacter aquaeolei).